Here is a 332-residue protein sequence, read N- to C-terminus: tRNA N6-adenosine threonylcarbamoyltransferase (332 aa).

Residues His-108 and His-112 each coordinate Fe cation. Residues 129 to 133 (LISGG), Asp-161, Glu-178, and Ser-258 contribute to the substrate site. Position 286 (Asp-286) interacts with Fe cation.

This sequence belongs to the KAE1 / TsaD family. The cofactor is Fe(2+).

Its subcellular location is the cytoplasm. The enzyme catalyses L-threonylcarbamoyladenylate + adenosine(37) in tRNA = N(6)-L-threonylcarbamoyladenosine(37) in tRNA + AMP + H(+). Its function is as follows. Required for the formation of a threonylcarbamoyl group on adenosine at position 37 (t(6)A37) in tRNAs that read codons beginning with adenine. Is probably involved in the transfer of the threonylcarbamoyl moiety of threonylcarbamoyl-AMP (TC-AMP) to the N6 group of A37. This chain is tRNA N6-adenosine threonylcarbamoyltransferase, found in Pyrobaculum arsenaticum (strain DSM 13514 / JCM 11321 / PZ6).